The sequence spans 677 residues: MTQVAKKILVTCALPYANGSIHLGHMLEHIQADVWVRYQRMRGHEVNFICADDAHGTPIMLKAQQLGITPEQMIGEMSQEHQTDFAGFNISYDNYHSTHSEENRQLSELIYSRLKENGFIKNRTISQLYDPEKGMFLPDRFVKGTCPKCKSPDQYGDNCEVCGATYSPTELIEPKSVVSGATPVMRDSEHFFFDLPSFSEMLQAWTRSGALQEQVANKMQEWFESGLQQWDISRDAPYFGFEIPNAPGKYFYVWLDAPIGYMGSFKNLCDKRGDSVSFDKYWKKDSTAELYHFIGKDIVYFHSLFWPAMLEGSNFRKPTNLFVHGYVTVNGAKMSKSRGTFIKASTWLNHFDADSLRYYYTAKLSSRIDDIDLNLEDFVQRVNADIVNKVVNLASRNAGFINKRFDGVLASELADPQLYKTFTDAAEVIGEAWESREFGKAVREIMALADLANRYVDEQAPWVVAKQEGRDADLQAICSMGINLFRVLMTYLKPVLPKLTERAEAFLNTELTWDGIQQPLLGHKVNPFKALYNRIDMKQVEALVEASKEEVKAAAAPVTGPLADDPIQETITFDDFAKVDLRVALIENAEFVEGSDKLLRLTLDLGGEKRNVFSGIRSAYPDPQALIGRHTIMVANLAPRKMRFGISEGMVMAAGPGGKDIFLLSPDAGAKPGHQVK.

Residues 15 to 25 (PYANGSIHLGH) carry the 'HIGH' region motif. Residues C146, C149, C159, and C162 each contribute to the Zn(2+) site. Residues 333–337 (KMSKS) carry the 'KMSKS' region motif. Residue K336 coordinates ATP. The tRNA-binding domain occupies 575 to 677 (DFAKVDLRVA…AGAKPGHQVK (103 aa)).

Belongs to the class-I aminoacyl-tRNA synthetase family. MetG type 1 subfamily. Homodimer. Requires Zn(2+) as cofactor.

Its subcellular location is the cytoplasm. The catalysed reaction is tRNA(Met) + L-methionine + ATP = L-methionyl-tRNA(Met) + AMP + diphosphate. Functionally, is required not only for elongation of protein synthesis but also for the initiation of all mRNA translation through initiator tRNA(fMet) aminoacylation. The sequence is that of Methionine--tRNA ligase from Escherichia coli O6:K15:H31 (strain 536 / UPEC).